The chain runs to 338 residues: tRNA N6-adenosine threonylcarbamoyltransferase (338 aa).

Fe cation-binding residues include His111 and His115. Substrate contacts are provided by residues 134 to 138 (LVSGG), Asp167, Gly180, and Asn272. Asp300 contributes to the Fe cation binding site.

The protein belongs to the KAE1 / TsaD family. Requires Fe(2+) as cofactor.

It localises to the cytoplasm. The catalysed reaction is L-threonylcarbamoyladenylate + adenosine(37) in tRNA = N(6)-L-threonylcarbamoyladenosine(37) in tRNA + AMP + H(+). Functionally, required for the formation of a threonylcarbamoyl group on adenosine at position 37 (t(6)A37) in tRNAs that read codons beginning with adenine. Is involved in the transfer of the threonylcarbamoyl moiety of threonylcarbamoyl-AMP (TC-AMP) to the N6 group of A37, together with TsaE and TsaB. TsaD likely plays a direct catalytic role in this reaction. The protein is tRNA N6-adenosine threonylcarbamoyltransferase of Nitrosomonas eutropha (strain DSM 101675 / C91 / Nm57).